Reading from the N-terminus, the 250-residue chain is Ubiquinone biosynthesis O-methyltransferase (250 aa).

S-adenosyl-L-methionine-binding residues include R41, G72, D93, and M136.

It belongs to the methyltransferase superfamily. UbiG/COQ3 family.

It carries out the reaction a 3-demethylubiquinol + S-adenosyl-L-methionine = a ubiquinol + S-adenosyl-L-homocysteine + H(+). The enzyme catalyses a 3-(all-trans-polyprenyl)benzene-1,2-diol + S-adenosyl-L-methionine = a 2-methoxy-6-(all-trans-polyprenyl)phenol + S-adenosyl-L-homocysteine + H(+). It participates in cofactor biosynthesis; ubiquinone biosynthesis. O-methyltransferase that catalyzes the 2 O-methylation steps in the ubiquinone biosynthetic pathway. This Agrobacterium fabrum (strain C58 / ATCC 33970) (Agrobacterium tumefaciens (strain C58)) protein is Ubiquinone biosynthesis O-methyltransferase.